Here is a 456-residue protein sequence, read N- to C-terminus: NAD-dependent deacetylase sir2C (456 aa).

One can recognise a Deacetylase sirtuin-type domain in the interval 161 to 443 (IEIENNKIKE…LNLSKLLNWD (283 aa)). Histidine 294 (proton acceptor) is an active-site residue. Residues cysteine 302, cysteine 305, cysteine 331, and cysteine 336 each coordinate Zn(2+).

The protein belongs to the sirtuin family. The cofactor is Zn(2+).

It catalyses the reaction N(6)-acetyl-L-lysyl-[protein] + NAD(+) + H2O = 2''-O-acetyl-ADP-D-ribose + nicotinamide + L-lysyl-[protein]. NAD-dependent deacetylase, which plays an important role in the regulation of transcriptional repression. This chain is NAD-dependent deacetylase sir2C (sir2C), found in Dictyostelium discoideum (Social amoeba).